We begin with the raw amino-acid sequence, 852 residues long: Protein SBE22 (852 aa).

Residues 1–158 (MTSIQERGTS…ADKSKINTFP (158 aa)) are disordered. Over residues 15 to 26 (SLKEGEASDRSS) the composition is skewed to basic and acidic residues. Polar residues predominate over residues 43-61 (PPSQTTLGRSRAGSNTMNK). At serine 72 the chain carries Phosphoserine. Polar residues predominate over residues 74 to 96 (NLLSNMNCSDNGNGGNMLNSFVN). A compositionally biased stretch (low complexity) spans 124 to 139 (TTEVFSSTSASSSLGD). Serine 201 carries the phosphoserine modification. A disordered region spans residues 206-248 (AAEKTMNKSRHSYQEQFSSKKSQSSLLNSKQRSRAKSQTCSST). Low complexity predominate over residues 224–235 (SKKSQSSLLNSK). Serine 459, serine 517, and serine 520 each carry phosphoserine.

It belongs to the SBE2 family.

The protein localises to the cytoplasm. It is found in the golgi apparatus. In terms of biological role, with SBE2, is involved in cell wall integrity and polarity processes like bud growth, through the transport of CHS3 and UTR2 to sites of growth. The sequence is that of Protein SBE22 (SBE22) from Saccharomyces cerevisiae (strain YJM789) (Baker's yeast).